A 341-amino-acid chain; its full sequence is Transmembrane protein 120A-A (341 aa).

At 1–131 the chain is on the cytoplasmic side; the sequence is MLFNPTGLTE…KQSKFAYKDE (131 aa). Residue K129 participates in CoA binding. A helical membrane pass occupies residues 132-151; sequence YEKFKLYLTVLLLFFSFTCR. Residues 152–157 lie on the Extracellular side of the membrane; that stretch reads FLVSYR. Residues 158-176 form a helical membrane-spanning segment; it reads VVDALFNFLLVWYYCTLTI. At 177-189 the chain is on the cytoplasmic side; that stretch reads RESILINNGSKIK. Positions 186 and 187 each coordinate CoA. A helical membrane pass occupies residues 190 to 208; that stretch reads GWWVFQHYVSTFLSGVMLT. Residues 209-217 lie on the Extracellular side of the membrane; that stretch reads WPDGELYQM. A helical membrane pass occupies residues 218–239; the sequence is FRNQFLSYSMYINFVQFFQYYY. Residues Q236, Y239, Q240, and H282 each coordinate CoA. The Cytoplasmic segment spans residues 240–269; that stretch reads QSGCLYRLRALGERHNMDLTVEGFQSWMWR. Residues 270 to 293 form a helical membrane-spanning segment; sequence GLTFLLPFLFLGHFFQLYNGITLF. At 294-303 the chain is on the extracellular side; that stretch reads QMTQLPEWKE. A helical transmembrane segment spans residues 304 to 329; that stretch reads WQVLMCGSTFLVLFMGNFFTTLGVVY. At 330–341 the chain is on the cytoplasmic side; that stretch reads HKYMDQDKAKGL. K331 contacts CoA.

Belongs to the TMEM120 family. In terms of assembly, homodimer.

It localises to the cell membrane. The protein localises to the nucleus inner membrane. It is found in the endoplasmic reticulum. Its function is as follows. Multifunctional protein involved in mechanosensation, and plays an essential role in lipid metabolism. May function as a potential ion channel involved in sensing mechanical stimuli. TMEM120A is structurally similar to a lipid-modifying enzyme, ELOVL7, and contains a bound coenzyme A molecule, which suggests it might function as an enzyme in lipid metabolism. This Danio rerio (Zebrafish) protein is Transmembrane protein 120A-A (tmem120aa).